A 359-amino-acid polypeptide reads, in one-letter code: 4-hydroxy-3-methylbut-2-en-1-yl diphosphate synthase (flavodoxin) (359 aa).

[4Fe-4S] cluster-binding residues include Cys-264, Cys-267, Cys-299, and Glu-306.

Belongs to the IspG family. It depends on [4Fe-4S] cluster as a cofactor.

The enzyme catalyses (2E)-4-hydroxy-3-methylbut-2-enyl diphosphate + oxidized [flavodoxin] + H2O + 2 H(+) = 2-C-methyl-D-erythritol 2,4-cyclic diphosphate + reduced [flavodoxin]. Its pathway is isoprenoid biosynthesis; isopentenyl diphosphate biosynthesis via DXP pathway; isopentenyl diphosphate from 1-deoxy-D-xylulose 5-phosphate: step 5/6. In terms of biological role, converts 2C-methyl-D-erythritol 2,4-cyclodiphosphate (ME-2,4cPP) into 1-hydroxy-2-methyl-2-(E)-butenyl 4-diphosphate. The protein is 4-hydroxy-3-methylbut-2-en-1-yl diphosphate synthase (flavodoxin) of Helicobacter pylori (strain P12).